We begin with the raw amino-acid sequence, 505 residues long: L-amino-acid oxidase (505 aa).

The N-terminal stretch at 1-18 is a signal peptide; sequence MNVFLMFSLLFLAALGSC. A disulfide bridge connects residues C28 and C191. FAD is bound by residues 61–62, 81–82, R89, and 105–108; these read MS, EA, and GPMR. R108 provides a ligand contact to substrate. A glycan (N-linked (GlcNAc...) asparagine) is linked at N190. H241 contributes to the substrate binding site. V279 serves as a coordination point for FAD. Residues C349 and C430 are joined by a disulfide bond. N-linked (GlcNAc...) asparagine glycosylation is present at N379. Y390 provides a ligand contact to substrate. FAD contacts are provided by residues E475 and 482 to 487; that span reads GWIDST. A substrate-binding site is contributed by 482 to 483; sequence GW.

The protein belongs to the flavin monoamine oxidase family. FIG1 subfamily. As to quaternary structure, monomer. This is in contrast with most of its orthologs, that are non-covalently linked homodimers. FAD is required as a cofactor. Post-translationally, N-glycosylated. Expressed by the venom gland.

It localises to the secreted. It carries out the reaction an L-alpha-amino acid + O2 + H2O = a 2-oxocarboxylate + H2O2 + NH4(+). The enzyme catalyses L-leucine + O2 + H2O = 4-methyl-2-oxopentanoate + H2O2 + NH4(+). Catalyzes an oxidative deamination of predominantly hydrophobic and aromatic L-amino acids, thus producing hydrogen peroxide that may contribute to the diverse toxic effects of this enzyme. Shows activity on L-Leu. Exhibits diverse biological activities, such as hemorrhage, edema, antibacterial and antiparasitic activities, as well as regulation of platelet aggregation. Effects of snake L-amino oxidases on platelets are controversial, since they either induce aggregation or inhibit agonist-induced aggregation. These different effects are probably due to different experimental conditions. This protein has an ability to induce hemolysis and apoptosis. The protein is L-amino-acid oxidase of Protobothrops flavoviridis (Habu).